Consider the following 461-residue polypeptide: D-phenylhydantoinase (461 aa).

A divalent metal cation-binding residues include His-59, His-61, and Lys-151. Position 151 is an N6-carboxylysine (Lys-151). Tyr-156 contributes to the substrate binding site. Residues His-182 and His-239 each contribute to the a divalent metal cation site. Substrate is bound at residue Ser-286. Residue Asp-313 participates in a divalent metal cation binding. Position 335 (Asn-335) interacts with substrate.

The protein belongs to the metallo-dependent hydrolases superfamily. Hydantoinase/dihydropyrimidinase family. In terms of assembly, homotetramer. It depends on a divalent metal cation as a cofactor. Post-translationally, carboxylation allows a single lysine to coordinate two divalent metal cations.

It catalyses the reaction D-5-phenylhydantoin + H2O = N-carbamoyl-D-phenylglycine + H(+). Its function is as follows. Catalyzes the stereospecific hydrolysis of the cyclic amide bond of D-hydantoin derivatives with an aromatic side chains at the 5'-position. Has no activity on dihydropyrimidines. The physiological function is unknown. This Escherichia coli O7:K1 (strain IAI39 / ExPEC) protein is D-phenylhydantoinase.